We begin with the raw amino-acid sequence, 222 residues long: Cytidylate kinase (222 aa).

9 to 17 contributes to the ATP binding site; sequence GPSGAGKST.

It belongs to the cytidylate kinase family. Type 1 subfamily.

It is found in the cytoplasm. The enzyme catalyses CMP + ATP = CDP + ADP. The catalysed reaction is dCMP + ATP = dCDP + ADP. This is Cytidylate kinase from Thermodesulfovibrio yellowstonii (strain ATCC 51303 / DSM 11347 / YP87).